A 434-amino-acid chain; its full sequence is Methylenetetrahydrofolate--tRNA-(uracil-5-)-methyltransferase TrmFO (434 aa).

9-14 (GAGLAG) lines the FAD pocket.

It belongs to the MnmG family. TrmFO subfamily. It depends on FAD as a cofactor.

It localises to the cytoplasm. The catalysed reaction is uridine(54) in tRNA + (6R)-5,10-methylene-5,6,7,8-tetrahydrofolate + NADH + H(+) = 5-methyluridine(54) in tRNA + (6S)-5,6,7,8-tetrahydrofolate + NAD(+). The enzyme catalyses uridine(54) in tRNA + (6R)-5,10-methylene-5,6,7,8-tetrahydrofolate + NADPH + H(+) = 5-methyluridine(54) in tRNA + (6S)-5,6,7,8-tetrahydrofolate + NADP(+). Its function is as follows. Catalyzes the folate-dependent formation of 5-methyl-uridine at position 54 (M-5-U54) in all tRNAs. This chain is Methylenetetrahydrofolate--tRNA-(uracil-5-)-methyltransferase TrmFO, found in Bacillus pumilus (strain SAFR-032).